The chain runs to 46 residues: Phoratoxin (46 aa).

Cystine bridges form between Cys3–Cys40, Cys4–Cys32, and Cys16–Cys26. Blocked carboxyl end (His) is present on His46.

The protein belongs to the plant thionin (TC 1.C.44) family.

Its subcellular location is the secreted. Its function is as follows. Thionins are small plant proteins which are toxic to animal cells. They seem to exert their toxic effect at the level of the cell membrane. Their precise function is not known. The chain is Phoratoxin from Phoradendron leucarpum subsp. tomentosum (California mistletoe).